The primary structure comprises 488 residues: MQEKLDLVIEGGWVIDGLGGPRRRADVGIRGERIAAIGDLSAAPADRRLDAGGRIVAPGFIDTHGHDDLMFVEKPGLEWKTSQGITSVVVGNCGISGAPAPLPGNTAAALALLGDSPLFADMAMYFGALEAQRPMINVAALVGHANLRLAAMRDPAAQPSAKEQRAMERMLADALEAGAVGFSTGLAYQPGGVAEQAELDGLARVAAARGALHTSHIRNEGDAVEAAVDEVLAVGRRTGCATVLSHHKCMMPANWGKSAATLANIDRARAAGVDVALDIYPYPGSSTILIPERADQIDDIRITWSTPHPECGGQSLAEIAARWGCDAVTAARRLCPAGAIYFAMDENEVRRIFQHECCMVGSDGLPNDAHPHPRLWGSFTRVLGRYVREAELLTLEAAVAKMTALPARVFGLADRGRLAVGAWADVVVFDADTVCDRATWDAPTLASAGIEHVLVNGCAVFPQAPPSHRPGRILRRDASIAGAPEFSR.

The protein belongs to the metallo-dependent hydrolases superfamily. N-acyl-D-amino-acid deacylase family. Requires Zn(2+) as cofactor.

It is found in the cytoplasm. It carries out the reaction an N-acyl-D-glutamate + H2O = D-glutamate + a carboxylate. Inhibited by cobalt, copper and EDTA. In Alcaligenes xylosoxydans xylosoxydans (Achromobacter xylosoxidans), this protein is N-acyl-D-glutamate deacylase.